Reading from the N-terminus, the 257-residue chain is Imidazole glycerol phosphate synthase subunit HisF (257 aa).

Residues Asp12 and Asp131 contribute to the active site.

It belongs to the HisA/HisF family. In terms of assembly, heterodimer of HisH and HisF.

It localises to the cytoplasm. It catalyses the reaction 5-[(5-phospho-1-deoxy-D-ribulos-1-ylimino)methylamino]-1-(5-phospho-beta-D-ribosyl)imidazole-4-carboxamide + L-glutamine = D-erythro-1-(imidazol-4-yl)glycerol 3-phosphate + 5-amino-1-(5-phospho-beta-D-ribosyl)imidazole-4-carboxamide + L-glutamate + H(+). The protein operates within amino-acid biosynthesis; L-histidine biosynthesis; L-histidine from 5-phospho-alpha-D-ribose 1-diphosphate: step 5/9. Functionally, IGPS catalyzes the conversion of PRFAR and glutamine to IGP, AICAR and glutamate. The HisF subunit catalyzes the cyclization activity that produces IGP and AICAR from PRFAR using the ammonia provided by the HisH subunit. This is Imidazole glycerol phosphate synthase subunit HisF from Burkholderia vietnamiensis (strain G4 / LMG 22486) (Burkholderia cepacia (strain R1808)).